The sequence spans 332 residues: Ketol-acid reductoisomerase (NAD(+)) (332 aa).

One can recognise a KARI N-terminal Rossmann domain in the interval 1 to 186; that stretch reads MEILHDEDVD…HWTKAGILEC (186 aa). NAD(+)-binding positions include 24–27, Glu-46, Asn-55, Ser-57, and 87–90; these read YGAQ and DEVQ. His-112 is an active-site residue. Residue Gly-138 coordinates NAD(+). Residues 187 to 332 enclose the KARI C-terminal knotted domain; that stretch reads TFEQETYEDL…AEIRKLFAQK (146 aa). Mg(2+) is bound by residues Asp-195, Glu-199, Glu-231, and Glu-235. Ser-256 is a substrate binding site.

Belongs to the ketol-acid reductoisomerase family. As to quaternary structure, homodimer. The cofactor is Mg(2+).

The catalysed reaction is (2R)-2,3-dihydroxy-3-methylbutanoate + NAD(+) = (2S)-2-acetolactate + NADH + H(+). Its pathway is amino-acid biosynthesis; L-isoleucine biosynthesis; L-isoleucine from 2-oxobutanoate: step 2/4. The protein operates within amino-acid biosynthesis; L-valine biosynthesis; L-valine from pyruvate: step 2/4. Functionally, involved in the biosynthesis of branched-chain amino acids (BCAA). Catalyzes an alkyl-migration followed by a ketol-acid reduction of (S)-2-acetolactate (S2AL) to yield (R)-2,3-dihydroxy-isovalerate. In the isomerase reaction, S2AL is rearranged via a Mg-dependent methyl migration to produce 3-hydroxy-3-methyl-2-ketobutyrate (HMKB). In the reductase reaction, this 2-ketoacid undergoes a metal-dependent reduction by NADH to yield (R)-2,3-dihydroxy-isovalerate. The polypeptide is Ketol-acid reductoisomerase (NAD(+)) (Uncultured archaeon GZfos26G2).